The following is a 277-amino-acid chain: Coiled-coil domain-containing protein 117 (277 aa).

Residues 1–69 (MAALGRPFSG…GRVSIHCRKK (69 aa)) form a disordered region. Residues 26–37 (FAGRAFPPGAAG) show a composition bias toward low complexity. An Omega-N-methylarginine modification is found at arginine 47. Serine 52 carries the phosphoserine modification. Over residues 58 to 69 (ARGRVSIHCRKK) the composition is skewed to basic residues. A coiled-coil region spans residues 139–166 (QCEVARRRLQEIEDRIIDEDEEVESDRN). The disordered stretch occupies residues 212–277 (LPELLPEKPK…ATSTEEEMEL (66 aa)).

Interacts with CIAO2B; the interaction is direct. Interacts with MMS19; the interaction is indirect.

It localises to the cytoplasm. The protein localises to the cytoskeleton. Its subcellular location is the spindle. The protein resides in the nucleus. In terms of biological role, facilitates DNA repair, cell cycle progression, and cell proliferation through its interaction with CIAO2B. The chain is Coiled-coil domain-containing protein 117 from Mus musculus (Mouse).